The sequence spans 543 residues: T-complex protein 1 subunit gamma (543 aa).

This sequence belongs to the TCP-1 chaperonin family.

Its subcellular location is the cytoplasm. In terms of biological role, molecular chaperone; assists the folding of proteins upon ATP hydrolysis. Known to play a role, in vitro, in the folding of actin and tubulin. Plays a role in microtubule polymerization. The protein is T-complex protein 1 subunit gamma of Caenorhabditis elegans.